Consider the following 45-residue polypeptide: MKVSSSIKADPSKGDKLVRRKGRLYVINKIDPNRKQRQAGPARKK.

Residues 1 to 20 (MKVSSSIKADPSKGDKLVRR) are disordered.

It belongs to the bacterial ribosomal protein bL36 family.

The chain is Large ribosomal subunit protein bL36 from Chlamydia abortus (strain DSM 27085 / S26/3) (Chlamydophila abortus).